A 295-amino-acid polypeptide reads, in one-letter code: Methionine aminopeptidase (295 aa).

H62 serves as a coordination point for substrate. A divalent metal cation-binding residues include D82, D93, and H153. H161 contacts substrate. A divalent metal cation is bound by residues E187 and E280.

The protein belongs to the peptidase M24A family. Methionine aminopeptidase archaeal type 2 subfamily. Monomer. It depends on Co(2+) as a cofactor. Zn(2+) is required as a cofactor. Requires Mn(2+) as cofactor. Fe(2+) serves as cofactor.

The catalysed reaction is Release of N-terminal amino acids, preferentially methionine, from peptides and arylamides.. In terms of biological role, removes the N-terminal methionine from nascent proteins. The N-terminal methionine is often cleaved when the second residue in the primary sequence is small and uncharged (Met-Ala-, Cys, Gly, Pro, Ser, Thr, or Val). In Pyrococcus abyssi (strain GE5 / Orsay), this protein is Methionine aminopeptidase.